Reading from the N-terminus, the 507-residue chain is MITLTPGRLTLPQLRRIARENVQIALDPASFAAIDRGAQAVADIAAKGEPAYGINTGFGRLASTHIPHDQLELLQKNLVLSHAVGVGEPMARPVVRLLMALKLSSLGRGHSGIRRVVMDALVTLFNADVLPLIPVKGSVGASGDLAPLAHMSAVLLGIGDVFIRGERASAAEGLRVAGLAPLTLEAKEGLALLNGTQASTALALDNLFAIEDLYRTALVSGALSVDAAAGSVKPFDARIHELRGHRGQIDAAAAYRSLLDGSAINVSHRDCDKVQDPYSLRCQPQVMGACLDQIRHAAGVLLIEANAVSDNPLIFPDTGEVLSGGNFHAEPVAFAADNLAIAAAEIGALAERRIALLIDATLSGLPPFLVKDGGVNSGFMIAHVTAAALASENKTLAHPASVDSLPTSANQEDHVSMATFAARKLADIAENVANILAIELLAAAQGVDLRAPHATSPALQHAMKTIRADVAHYDLDHYFAPDIAVVARRVRERAFATLSPLSFESEQ.

Residues Ala141 to Gly143 constitute a cross-link (5-imidazolinone (Ala-Gly)). Ser142 carries the post-translational modification 2,3-didehydroalanine (Ser).

Belongs to the PAL/histidase family. Post-translationally, contains an active site 4-methylidene-imidazol-5-one (MIO), which is formed autocatalytically by cyclization and dehydration of residues Ala-Ser-Gly.

It is found in the cytoplasm. The catalysed reaction is L-histidine = trans-urocanate + NH4(+). Its pathway is amino-acid degradation; L-histidine degradation into L-glutamate; N-formimidoyl-L-glutamate from L-histidine: step 1/3. The protein is Histidine ammonia-lyase of Burkholderia pseudomallei (strain 1106a).